A 403-amino-acid polypeptide reads, in one-letter code: Argininosuccinate synthase (403 aa).

9-17 (AYSGGLDTS) is a binding site for ATP. Position 86 (Tyr86) interacts with L-citrulline. Residue Gly116 coordinates ATP. Thr118, Asn122, and Asp123 together coordinate L-aspartate. Residue Asn122 coordinates L-citrulline. Arg126, Ser174, Ser183, Glu259, and Tyr271 together coordinate L-citrulline.

It belongs to the argininosuccinate synthase family. Type 1 subfamily. In terms of assembly, homotetramer.

It is found in the cytoplasm. It catalyses the reaction L-citrulline + L-aspartate + ATP = 2-(N(omega)-L-arginino)succinate + AMP + diphosphate + H(+). The protein operates within amino-acid biosynthesis; L-arginine biosynthesis; L-arginine from L-ornithine and carbamoyl phosphate: step 2/3. The chain is Argininosuccinate synthase from Shouchella clausii (strain KSM-K16) (Alkalihalobacillus clausii).